A 151-amino-acid polypeptide reads, in one-letter code: Large ribosomal subunit protein bL9 (151 aa).

This sequence belongs to the bacterial ribosomal protein bL9 family.

Functionally, binds to the 23S rRNA. In Kosmotoga olearia (strain ATCC BAA-1733 / DSM 21960 / TBF 19.5.1), this protein is Large ribosomal subunit protein bL9.